The sequence spans 188 residues: Ribosome-recycling factor (188 aa).

It belongs to the RRF family.

The protein localises to the cytoplasm. Responsible for the release of ribosomes from messenger RNA at the termination of protein biosynthesis. May increase the efficiency of translation by recycling ribosomes from one round of translation to another. This is Ribosome-recycling factor from Caulobacter sp. (strain K31).